Reading from the N-terminus, the 218-residue chain is 25.3 kDa vesicle transport protein SEC22-1 (218 aa).

Residues 1 to 192 are Cytoplasmic-facing; the sequence is MVKMTLIARV…DKAKDLNRQA (192 aa). The Longin domain maps to 6-120; that stretch reads LIARVTDGLP…YAFIKFDTFI (115 aa). The region spanning 135-195 is the v-SNARE coiled-coil homology domain; it reads NIAKLNDELY…KDLNRQALIR (61 aa). A helical; Anchor for type IV membrane protein membrane pass occupies residues 193-213; sequence LIRKWAPVAIVFGVVFLLFWV. Residues 214-218 are Vesicular-facing; it reads KNKLW.

This sequence belongs to the synaptobrevin family. As to quaternary structure, interacts with SEC24A. Mainly expressed in flowers and siliques, to a lower extent in seedlings, and barely in roots and leaves.

It is found in the golgi apparatus membrane. The protein resides in the endoplasmic reticulum membrane. Functionally, V-SNARE involved in vesicle trafficking from the ER to the Golgi complex and required for early secretion. Involved in endoplasmic reticulum (ER) biogenesis and functions as well as for Golgi-stack integrity. Essential for gametophytes development. Involved in cesium Cs(+) accumulation, a non-essential cation. In Arabidopsis thaliana (Mouse-ear cress), this protein is 25.3 kDa vesicle transport protein SEC22-1.